We begin with the raw amino-acid sequence, 824 residues long: Frameshifted structural polyprotein (824 aa).

Polar residues predominate over residues 1–10 (MEFIPTQTFY). Positions 1 to 104 (MEFIPTQTFY…KKKKPGRRER (104 aa)) are disordered. Residues 22 to 44 (RPTIQVIRPRPRPQRQAGQLAQL) are compositionally biased toward low complexity. A host transcription inhibition region spans residues 36-68 (RQAGQLAQLISAVNKLTMRAVPQQKPRKNRKNK). Residues 60 to 72 (KPRKNRKNKKQKQ) are compositionally biased toward basic residues. Residues 61 to 99 (PRKNRKNKKQKQKQQAPQNNTNQKKQPPKKKPAQKKKKP) carry the Nuclear localization signal motif. Residues 73 to 85 (KQQAPQNNTNQKK) show a composition bias toward low complexity. A binding to the viral RNA region spans residues 84-114 (KKQPPKKKPAQKKKKPGRRERMCMKIENDCI). A compositionally biased stretch (basic residues) spans 86-101 (QPPKKKPAQKKKKPGR). Ribosome-binding regions lie at residues 91–100 (KPAQKKKKPG) and 99–113 (PGRRERMCMKIENDC). A disulfide bridge connects residues Cys-113 and Cys-128. Positions 113 to 261 (CIFEVKHEGK…KITPEGAEEW (149 aa)) constitute a Peptidase S3 domain. The active-site Charge relay system is His-139. Residues 144 to 154 (IDNADLAKLAF) carry the Nuclear export signal motif. The Charge relay system role is filled by Asp-161. Residues 183-193 (PEGYYNWHHGA) are dimerization of the capsid protein. The active-site Charge relay system is Ser-213. Residues 219-223 (DNKGR) form a dimerization of the capsid protein region. The tract at residues 262–274 (SLAIPVMCLLANT) is functions as an uncleaved signal peptide for the precursor of protein E3/E2. The Extracellular portion of the chain corresponds to 262-692 (SLAIPVMCLL…YYYELYPTMT (431 aa)). 3 N-linked (GlcNAc...) asparagine; by host glycosylation sites follow: Asn-273, Asn-588, and Asn-670. The chain crosses the membrane as a helical span at residues 693 to 713 (VVVVSVASFILLSMVGMAVGM). Over 714–748 (CMCARRRCITPYELTPGATVPFLLSLICCIRTAKA) the chain is Cytoplasmic. 3 S-palmitoyl cysteine; by host lipidation sites follow: Cys-721, Cys-741, and Cys-742. Residues 721–741 (CITPYELTPGATVPFLLSLIC) are transient transmembrane before p62-6K protein processing. Topologically, residues 749-763 (ATYQEAAVYLWNEQQ) are extracellular. The chain crosses the membrane as a helical span at residues 764-784 (PLFWLQALIPLAALIVLCNCL). Topologically, residues 785–795 (RLLPCCCKTLA) are cytoplasmic.

Belongs to the alphavirus frameshifted structural polyprotein family. As to quaternary structure, homodimer. Homomultimer. Interacts with host karyopherin KPNA4; this interaction allows the nuclear import of the viral capsid protein. Interacts with spike glycoprotein E2. Interacts with host IRAK1; the interaction leads to inhibition of IRAK1-dependent signaling. In terms of assembly, the precursor of protein E3/E2 and E1 form a heterodimer shortly after synthesis. Processing of the precursor of protein E3/E2 into E2 and E3 results in a heterodimer of the spike glycoproteins E2 and E1. Spike at virion surface are constituted of three E2-E1 heterodimers. Interacts with 6K protein. Interacts with host MXRA8; this interaction mediates virus entry. In terms of processing, specific enzymatic cleavages in vivo yield mature proteins. Capsid protein is auto-cleaved during polyprotein translation, unmasking a signal peptide at the N-terminus of the precursor of E3/E2. The remaining polyprotein is then targeted to the host endoplasmic reticulum, where host signal peptidase cleaves it into pE2 and TF. pE2 is further processed to mature E3 and E2 by host furin in trans-Golgi vesicle. Palmitoylated via thioester bonds. These palmitoylations may induce disruption of the C-terminus transmembrane. This would result in the reorientation of E2 C-terminus from lumenal to cytoplasmic side. Post-translationally, palmitoylated via thioester bonds.

It is found in the virion. The protein resides in the host cytoplasm. It localises to the host cell membrane. The protein localises to the host nucleus. Its subcellular location is the virion membrane. It catalyses the reaction Autocatalytic release of the core protein from the N-terminus of the togavirus structural polyprotein by hydrolysis of a -Trp-|-Ser- bond.. Functionally, forms an icosahedral capsid with a T=4 symmetry composed of 240 copies of the capsid protein surrounded by a lipid membrane through which penetrate 80 spikes composed of trimers of E1-E2 heterodimers. The capsid protein binds to the viral RNA genome at a site adjacent to a ribosome binding site for viral genome translation following genome release. Possesses a protease activity that results in its autocatalytic cleavage from the nascent structural protein. Following its self-cleavage, the capsid protein transiently associates with ribosomes, and within several minutes the protein binds to viral RNA and rapidly assembles into icosahedric core particles. The resulting nucleocapsid eventually associates with the cytoplasmic domain of the spike glycoprotein E2 at the cell membrane, leading to budding and formation of mature virions. In case of infection, new virions attach to target cells and after clathrin-mediated endocytosis their membrane fuses with the host endosomal membrane. This leads to the release of the nucleocapsid into the cytoplasm, followed by an uncoating event necessary for the genomic RNA to become accessible. The uncoating might be triggered by the interaction of capsid proteins with ribosomes. Binding of ribosomes would release the genomic RNA since the same region is genomic RNA-binding and ribosome-binding. Specifically inhibits interleukin-1 receptor-associated kinase 1/IRAK1-dependent signaling during viral entry, representing a means by which the alphaviruses may evade innate immune detection and activation prior to viral gene expression. Its function is as follows. Provides the signal sequence for the translocation of the precursor of protein E3/E2 to the host endoplasmic reticulum. Furin-cleaved E3 remains associated with spike glycoprotein E1 and mediates pH protection of the latter during the transport via the secretory pathway. After virion release from the host cell, the assembly protein E3 is gradually released in the extracellular space. Plays a role in viral attachment to target host cell, by binding to the cell receptor. Synthesized as a p62 precursor which is processed by furin at the cell membrane just before virion budding, giving rise to E2-E1 heterodimer. The p62-E1 heterodimer is stable, whereas E2-E1 is unstable and dissociate at low pH. p62 is processed at the last step, presumably to avoid E1 fusion activation before its final export to cell surface. E2 C-terminus contains a transitory transmembrane that would be disrupted by palmitoylation, resulting in reorientation of the C-terminal tail from lumenal to cytoplasmic side. This step is critical since E2 C-terminus is involved in budding by interacting with capsid proteins. This release of E2 C-terminus in cytoplasm occurs lately in protein export, and precludes premature assembly of particles at the endoplasmic reticulum membrane. In terms of biological role, plays a role in viral assembly and release. This is Frameshifted structural polyprotein from Aedes aegypti (Yellowfever mosquito).